We begin with the raw amino-acid sequence, 737 residues long: 1,4-alpha-glucan branching enzyme GlgB (737 aa).

The active-site Nucleophile is Asp-419. Catalysis depends on Glu-472, which acts as the Proton donor.

This sequence belongs to the glycosyl hydrolase 13 family. GlgB subfamily. Monomer.

The catalysed reaction is Transfers a segment of a (1-&gt;4)-alpha-D-glucan chain to a primary hydroxy group in a similar glucan chain.. The protein operates within glycan biosynthesis; glycogen biosynthesis. In terms of biological role, catalyzes the formation of the alpha-1,6-glucosidic linkages in glycogen by scission of a 1,4-alpha-linked oligosaccharide from growing alpha-1,4-glucan chains and the subsequent attachment of the oligosaccharide to the alpha-1,6 position. This Cellvibrio japonicus (strain Ueda107) (Pseudomonas fluorescens subsp. cellulosa) protein is 1,4-alpha-glucan branching enzyme GlgB.